A 257-amino-acid chain; its full sequence is Galactitol 2-dehydrogenase (257 aa).

Residues 21–23, 67–68, asparagine 94, tyrosine 162, and lysine 166 each bind NAD(+); these read RAI and DV. The active-site Proton acceptor is the tyrosine 162.

The protein belongs to the short-chain dehydrogenases/reductases (SDR) family. In terms of assembly, homotetramer. The cofactor is Mg(2+).

It carries out the reaction galactitol + NAD(+) = keto-D-tagatose + NADH + H(+). Functionally, catalyzes the oxidation of galactitol to D-tagatose. Also catalyzes the oxidation of a wide range of substrates, including polyvalent aliphatic alcohols and polyols, to the corresponding ketones and ketoses. Galactitol is the preferred substrate. This Rhizobium johnstonii (strain DSM 114642 / LMG 32736 / 3841) (Rhizobium leguminosarum bv. viciae) protein is Galactitol 2-dehydrogenase.